A 1145-amino-acid chain; its full sequence is Cation channel sperm-associated auxiliary subunit gamma 2 (1145 aa).

Residues 1–38 (MVSRPAMSPVSPVWPRKPNLWAFWVLRLVLLLSLKSWA) form the signal peptide. The Extracellular segment spans residues 39–1061 (EDALQHCTWL…IHGLPLSSKR (1023 aa)). 2 cysteine pairs are disulfide-bonded: Cys45/Cys106 and Cys160/Cys166. An N-linked (GlcNAc...) asparagine glycan is attached at Asn103. An N-linked (GlcNAc...) asparagine glycan is attached at Asn178. The cysteines at positions 289 and 344 are disulfide-linked. N-linked (GlcNAc...) asparagine glycans are attached at residues Asn356, Asn402, Asn672, and Asn743. 6 cysteine pairs are disulfide-bonded: Cys395-Cys403, Cys634-Cys856, Cys802-Cys830, Cys878-Cys1042, Cys905-Cys914, and Cys1006-Cys1012. An N-linked (GlcNAc...) asparagine glycan is attached at Asn1038. The chain crosses the membrane as a helical span at residues 1062–1083 (TSFIVMVSTSFFIALVVFYILF). The Cytoplasmic portion of the chain corresponds to 1084-1145 (CLVWPHIVKA…KEDNVQAKTA (62 aa)).

It belongs to the CATSPERG family. Component of the CatSper complex or CatSpermasome composed of the core pore-forming members CATSPER1, CATSPER2, CATSPER3 and CATSPER4 as well as auxiliary members CATSPERB, CATSPERG2, CATSPERD, CATSPERE, CATSPERZ, C2CD6/CATSPERT, SLCO6C1, TMEM249, TMEM262 and EFCAB9. HSPA1 may be an additional auxiliary complex member. The core complex members CATSPER1, CATSPER2, CATSPER3 and CATSPER4 form a heterotetrameric channel. The auxiliary CATSPERB, CATSPERG2, CATSPERD and CATSPERE subunits form a pavilion-like structure over the pore which stabilizes the complex through interactions with CATSPER4, CATSPER3, CATSPER1 and CATSPER2 respectively. SLCO6C1 interacts with CATSPERE and TMEM262/CATSPERH interacts with CATSPERB, further stabilizing the complex. C2CD6/CATSPERT interacts at least with CATSPERD and is required for targeting the CatSper complex in the flagellar membrane. In terms of tissue distribution, testis-specific. Specifically expressed in the principal piece of the sperm tail (at protein level). Expressed in spermatocytes and spermatids within the seminiferous tubule but not in interstitial cells.

It is found in the cell projection. Its subcellular location is the cilium. The protein localises to the flagellum membrane. In terms of biological role, auxiliary component of the CatSper complex, a complex involved in sperm cell hyperactivation. Sperm cell hyperactivation is needed for sperm motility which is essential late in the preparation of sperm for fertilization. The protein is Cation channel sperm-associated auxiliary subunit gamma 2 of Mus musculus (Mouse).